Reading from the N-terminus, the 72-residue chain is Penaeidin-2a (72 aa).

The signal sequence occupies residues M1–A21. 3 disulfide bridges follow: C45–C59, C48–C66, and C60–C67. K71 is subject to Lysine amide.

In terms of tissue distribution, higher expression in hemocytes and to a lesser extent in heart, testis, gills, intestine, lymphoid organ and hepatopancreas. Traces in eyes and subcuticular epithelium. Not present in the brain.

It localises to the cytoplasmic granule. Functionally, antibacterial activity against M.luteus and E.coli bacteria. Antifungal activity against N.crassa and F.oxysporum. Presents chitin-binding activity. The protein is Penaeidin-2a of Penaeus vannamei (Whiteleg shrimp).